We begin with the raw amino-acid sequence, 473 residues long: Ribulose bisphosphate carboxylase large chain (473 aa).

Residues asparagine 116 and threonine 166 each coordinate substrate. Catalysis depends on lysine 168, which acts as the Proton acceptor. Residue lysine 170 participates in substrate binding. Positions 194, 196, and 197 each coordinate Mg(2+). Residue lysine 194 is modified to N6-carboxylysine. Histidine 287 (proton acceptor) is an active-site residue. Substrate contacts are provided by arginine 288, histidine 320, and serine 372.

Belongs to the RuBisCO large chain family. Type I subfamily. Heterohexadecamer of 8 large chains and 8 small chains. In R.sphaeroides the complex is approximately 500 kDa. The cofactor is Mg(2+).

The catalysed reaction is 2 (2R)-3-phosphoglycerate + 2 H(+) = D-ribulose 1,5-bisphosphate + CO2 + H2O. It carries out the reaction D-ribulose 1,5-bisphosphate + O2 = 2-phosphoglycolate + (2R)-3-phosphoglycerate + 2 H(+). RuBisCO catalyzes two reactions: the carboxylation of D-ribulose 1,5-bisphosphate, the primary event in carbon dioxide fixation, as well as the oxidative fragmentation of the pentose substrate. Both reactions occur simultaneously and in competition at the same active site. The chain is Ribulose bisphosphate carboxylase large chain from Thiobacillus denitrificans (strain ATCC 25259 / T1).